A 122-amino-acid polypeptide reads, in one-letter code: Large ribosomal subunit protein bL12 (122 aa).

It belongs to the bacterial ribosomal protein bL12 family. Homodimer. Part of the ribosomal stalk of the 50S ribosomal subunit. Forms a multimeric L10(L12)X complex, where L10 forms an elongated spine to which 2 to 4 L12 dimers bind in a sequential fashion. Binds GTP-bound translation factors.

Forms part of the ribosomal stalk which helps the ribosome interact with GTP-bound translation factors. Is thus essential for accurate translation. The protein is Large ribosomal subunit protein bL12 of Actinobacillus succinogenes (strain ATCC 55618 / DSM 22257 / CCUG 43843 / 130Z).